The following is a 267-amino-acid chain: Acyl-[acyl-carrier-protein]--UDP-N-acetylglucosamine O-acyltransferase (267 aa).

The protein belongs to the transferase hexapeptide repeat family. LpxA subfamily. As to quaternary structure, homotrimer.

It is found in the cytoplasm. The catalysed reaction is a (3R)-hydroxyacyl-[ACP] + UDP-N-acetyl-alpha-D-glucosamine = a UDP-3-O-[(3R)-3-hydroxyacyl]-N-acetyl-alpha-D-glucosamine + holo-[ACP]. It participates in glycolipid biosynthesis; lipid IV(A) biosynthesis; lipid IV(A) from (3R)-3-hydroxytetradecanoyl-[acyl-carrier-protein] and UDP-N-acetyl-alpha-D-glucosamine: step 1/6. In terms of biological role, involved in the biosynthesis of lipid A, a phosphorylated glycolipid that anchors the lipopolysaccharide to the outer membrane of the cell. The sequence is that of Acyl-[acyl-carrier-protein]--UDP-N-acetylglucosamine O-acyltransferase from Proteus mirabilis (strain HI4320).